Here is a 325-residue protein sequence, read N- to C-terminus: Pectinesterase A (325 aa).

The N-terminal stretch at 1-18 is a signal peptide; it reads MRVQSYLSLFSLVGAALC. Asn-126 carries an N-linked (GlcNAc...) asparagine glycan. Residue Gln-143 coordinates substrate. Residue Asp-166 is the Proton donor of the active site. The active-site Nucleophile is the Asp-187. Positions 247 and 249 each coordinate substrate.

It belongs to the pectinesterase family.

Its subcellular location is the secreted. The catalysed reaction is [(1-&gt;4)-alpha-D-galacturonosyl methyl ester](n) + n H2O = [(1-&gt;4)-alpha-D-galacturonosyl](n) + n methanol + n H(+). It participates in glycan metabolism; pectin degradation; 2-dehydro-3-deoxy-D-gluconate from pectin: step 1/5. In terms of biological role, involved in maceration and soft-rotting of plant tissue. Active against citrus pectin. The polypeptide is Pectinesterase A (pmeA) (Emericella nidulans (strain FGSC A4 / ATCC 38163 / CBS 112.46 / NRRL 194 / M139) (Aspergillus nidulans)).